Reading from the N-terminus, the 35-residue chain is Conotoxin M11.2 (35 aa).

Intrachain disulfides connect C2–C16, C9–C21, C15–C26, and C20–C33.

Belongs to the conotoxin I1 superfamily. Expressed by the venom duct.

It is found in the secreted. This Conus magus (Magical cone) protein is Conotoxin M11.2.